Here is a 4650-residue protein sequence, read N- to C-terminus: Nonribosomal peptide synthetase lenA (4650 aa).

The tract at residues 227–628 is adenylation 1; that stretch reads GSILDTIRAK…DGSVIHVGRK (402 aa). One can recognise a Carrier 1 domain in the interval 773–849; the sequence is PPETVLEKAL…KLAQYLRNTE (77 aa). Ser-810 is subject to O-(pantetheine 4'-phosphoryl)serine. Residues 890 to 1212 are condensation 1; that stretch reads EDCYPCTALQ…CDFQSQLIFQ (323 aa). Residues 1288-1622 form an adenylation 2 region; sequence ELELNAQKEP…RKIRPGYLGR (335 aa). Residues 1745–1822 form the Carrier 2 domain; sequence PPVSAAEKKW…EIAALSETRD (78 aa). Ser-1782 is modified (O-(pantetheine 4'-phosphoryl)serine). Positions 1850-2110 are condensation 2; it reads ATNLIAATVH…GEKTRPGGGA (261 aa). Residues 2183-2511 are adenylation 3; it reads RCVHDLVHDA…RTGDLIKLRG (329 aa). One can recognise a Carrier 3 domain in the interval 2630–2708; that stretch reads APQNRLQHDI…EADVGLDHAS (79 aa). Position 2667 is an O-(pantetheine 4'-phosphoryl)serine (Ser-2667). Positions 2722 to 2998 are epimerase; that stretch reads ESMARALAVI…KDARRRSPAN (277 aa). The interval 3128–3565 is condensation 3; that stretch reads VQDVYPCTPI…VDDSQRQQIL (438 aa). Positions 3578–3980 are adenylation 4; the sequence is CVHHIIHQRC…FVGRKDNQIK (403 aa). A Carrier 4 domain is found at 4114 to 4190; sequence TPSTPLEAQL…QLAAVLEEGA (77 aa). O-(pantetheine 4'-phosphoryl)serine is present on Ser-4151. Positions 4249–4648 are condensation 4; that stretch reads HMVLTFSQPV…TTTPEKLVAE (400 aa).

It belongs to the NRP synthetase family. The cofactor is pantetheine 4'-phosphate.

Its pathway is alkaloid biosynthesis. In terms of biological role, nonribosomal peptide synthetase; part of the gene cluster that mediates the biosynthesis of the ergot alkaloids lentopeptins A and B. Within the pathway, lenA catalyzes the biosynthesis of the Ala-Val-Ala peptide chain, including a cinnamic acid moiety as the starting unit. The release of the peptide from the enzyme is accomplished via a cyclization reaction catalyzed by the terminal condensation-like (Ct) domain of lenA to form the N-acyldiketopiperazine intermediate. The reaction appears to proceed through a nucleophilic attack on the carbonyl carbon by a lone electron pair of the valine amide nitrogen. The phenylalanine ammonia-lyase lenB provides the starter unit for the synthesis of the N-acyldiketopiperazine intermediate by the NRPS lenA, while the cytochrome P450 monooxygenase lenC is involved in the post-NRPS oxidative modification steps to form lentopeptins A and B. In Aspergillus lentulus, this protein is Nonribosomal peptide synthetase lenA.